The primary structure comprises 297 residues: Protein BCCIP homolog (297 aa).

Positions 1–40 are disordered; the sequence is MSANKQKKLSTMEVDPNEDVSSSSEDDDDDEPHPDAYKGN.

The protein belongs to the BCP1 family.

The protein is Protein BCCIP homolog of Drosophila melanogaster (Fruit fly).